Reading from the N-terminus, the 355-residue chain is tRNA (guanine-N(1)-)-methyltransferase (355 aa).

Residues Gly109 and 129-134 (IGDYVL) contribute to the S-adenosyl-L-methionine site.

This sequence belongs to the RNA methyltransferase TrmD family. Homodimer.

It localises to the cytoplasm. It carries out the reaction guanosine(37) in tRNA + S-adenosyl-L-methionine = N(1)-methylguanosine(37) in tRNA + S-adenosyl-L-homocysteine + H(+). In terms of biological role, specifically methylates guanosine-37 in various tRNAs. The polypeptide is tRNA (guanine-N(1)-)-methyltransferase (Chlamydia caviae (strain ATCC VR-813 / DSM 19441 / 03DC25 / GPIC) (Chlamydophila caviae)).